Here is a 1929-residue protein sequence, read N- to C-terminus: Myoferlin (1929 aa).

Residues 1–53 (MISYEPPPSAISNPTDPGGTTIIQGDGENDEEEDRDIVDAGFNPSVPGAPGQT) form a disordered region. Acidic residues predominate over residues 27-36 (GENDEEEDRD). 2 C2 domains span residues 62-179 (VKGK…RKWV) and 218-354 (EDDD…EEYD). Ca(2+) contacts are provided by D267, D275, D323, D325, and D331. Basic residues predominate over residues 898 to 907 (RRLVRKRKKD). Positions 898 to 918 (RRLVRKRKKDPKVSTTSKAAL) are disordered. C2 domains lie at 996–1124 (GANT…LLWY), 1159–1283 (RAPQ…TKHE), 1408–1527 (IPYP…SHCG), and 1645–1793 (GPPG…EKCS). Ca(2+) contacts are provided by D1028, D1034, D1090, and D1092. 7 residues coordinate Ca(2+): D1442, D1448, D1497, D1499, D1764, S1767, and D1770. The segment covering 1845–1858 (DAEERPAGKGRDEP) has biased composition (basic and acidic residues). The interval 1845-1867 (DAEERPAGKGRDEPNMNPKLDPP) is disordered. A helical membrane pass occupies residues 1894-1914 (WVFIGLIILLLVLLFLGVFFY).

The protein belongs to the ferlin family. Ca(2+) is required as a cofactor.

Its subcellular location is the cell membrane. It localises to the nucleus membrane. It is found in the cytoplasmic vesicle membrane. Its function is as follows. May play a role in membrane regeneration and repair. The sequence is that of Myoferlin (myof) from Xenopus tropicalis (Western clawed frog).